Reading from the N-terminus, the 564-residue chain is Dihydroxy-acid dehydratase (564 aa).

D80 lines the Mg(2+) pocket. Residue C121 coordinates [2Fe-2S] cluster. Mg(2+) contacts are provided by D122 and K123. K123 bears the N6-carboxylysine mark. C194 is a [2Fe-2S] cluster binding site. Mg(2+) is bound at residue E447. The active-site Proton acceptor is S473.

This sequence belongs to the IlvD/Edd family. In terms of assembly, homodimer. [2Fe-2S] cluster is required as a cofactor. Requires Mg(2+) as cofactor.

The enzyme catalyses (2R)-2,3-dihydroxy-3-methylbutanoate = 3-methyl-2-oxobutanoate + H2O. The catalysed reaction is (2R,3R)-2,3-dihydroxy-3-methylpentanoate = (S)-3-methyl-2-oxopentanoate + H2O. Its pathway is amino-acid biosynthesis; L-isoleucine biosynthesis; L-isoleucine from 2-oxobutanoate: step 3/4. It participates in amino-acid biosynthesis; L-valine biosynthesis; L-valine from pyruvate: step 3/4. Functionally, functions in the biosynthesis of branched-chain amino acids. Catalyzes the dehydration of (2R,3R)-2,3-dihydroxy-3-methylpentanoate (2,3-dihydroxy-3-methylvalerate) into 2-oxo-3-methylpentanoate (2-oxo-3-methylvalerate) and of (2R)-2,3-dihydroxy-3-methylbutanoate (2,3-dihydroxyisovalerate) into 2-oxo-3-methylbutanoate (2-oxoisovalerate), the penultimate precursor to L-isoleucine and L-valine, respectively. In Listeria welshimeri serovar 6b (strain ATCC 35897 / DSM 20650 / CCUG 15529 / CIP 8149 / NCTC 11857 / SLCC 5334 / V8), this protein is Dihydroxy-acid dehydratase.